The following is a 77-amino-acid chain: Large ribosomal subunit protein eL14 (77 aa).

This sequence belongs to the eukaryotic ribosomal protein eL14 family.

The protein is Large ribosomal subunit protein eL14 of Methanococcus maripaludis (strain C5 / ATCC BAA-1333).